The sequence spans 63 residues: Cytotoxin homolog S3C2 (63 aa).

Intrachain disulfides connect cysteine 3–cysteine 22, cysteine 15–cysteine 40, cysteine 44–cysteine 55, and cysteine 56–cysteine 61.

This sequence belongs to the three-finger toxin family. Short-chain subfamily. Orphan group XVI sub-subfamily. In terms of tissue distribution, expressed by the venom gland.

It is found in the secreted. The polypeptide is Cytotoxin homolog S3C2 (Aspidelaps scutatus (Shield-nose snake)).